The sequence spans 261 residues: MTYNPRIGGFTHVKQASFDVHVKRSEARPRTSFAQQIKRIFSKIGETLGQLFRHRAPDGAPGRVKLQGVRYVGSYRPTGDARQAIRHFVDEAVKQVAHARTPEIRQDAEFGRQVYEATLCAIFSEAKDRFCMDPATRAGNVRPAFIAALGDAARATGLPGADKQGVFTPSGAGTNPLYTEIRLRADTLMGAELAARPEYRELQSYARQQAIDLVANALPGERSNTLAEFRQTVQTLEATYRRAAQDASRDEKGAANAADGA.

Basic and acidic residues predominate over residues 241-253; sequence RRAAQDASRDEKG. The interval 241 to 261 is disordered; that stretch reads RRAAQDASRDEKGAANAADGA.

Belongs to the GEF (guanine exchange factor) SopE family. In terms of assembly, monomer. Interacts with human CDC42.

It is found in the secreted. Functionally, activator for both CDC42 and RAC1 by directly interacting with these Rho GTPases and acting as a guanine nucleotide exchange factor (GEF). This activation results in actin cytoskeleton rearrangements and stimulates membrane ruffling, thus promoting bacterial entry into non-phagocytic cells. The sequence is that of Guanine nucleotide exchange factor BopE (bopE) from Burkholderia thailandensis (strain ATCC 700388 / DSM 13276 / CCUG 48851 / CIP 106301 / E264).